The following is a 347-amino-acid chain: Histidinol-phosphate aminotransferase (347 aa).

Lysine 209 carries the N6-(pyridoxal phosphate)lysine modification.

Belongs to the class-II pyridoxal-phosphate-dependent aminotransferase family. Histidinol-phosphate aminotransferase subfamily. In terms of assembly, homodimer. Requires pyridoxal 5'-phosphate as cofactor.

It carries out the reaction L-histidinol phosphate + 2-oxoglutarate = 3-(imidazol-4-yl)-2-oxopropyl phosphate + L-glutamate. Its pathway is amino-acid biosynthesis; L-histidine biosynthesis; L-histidine from 5-phospho-alpha-D-ribose 1-diphosphate: step 7/9. This is Histidinol-phosphate aminotransferase from Geotalea uraniireducens (strain Rf4) (Geobacter uraniireducens).